A 418-amino-acid polypeptide reads, in one-letter code: CinA-like protein (418 aa).

The protein belongs to the CinA family.

The sequence is that of CinA-like protein from Leptospira interrogans serogroup Icterohaemorrhagiae serovar Lai (strain 56601).